The following is a 121-amino-acid chain: Replication protein A 14 kDa subunit (121 aa).

Residues Lys-39 and Lys-88 each participate in a glycyl lysine isopeptide (Lys-Gly) (interchain with G-Cter in ubiquitin) cross-link.

The protein belongs to the replication factor A protein 3 family. Component of the canonical replication protein A complex (RPA), a heterotrimer composed of RPA1, RPA2 and RPA3. Also a component of the aRPA, the alternative replication protein A complex, a trimeric complex similar to the replication protein A complex/RPA but where RPA1 and RPA3 are associated with RPA4 instead of RPA2. In terms of processing, ubiquitinated by RFWD3 at stalled replication forks in response to DNA damage: ubiquitination by RFWD3 does not lead to degradation by the proteasome and promotes removal of the RPA complex from stalled replication forks, promoting homologous recombination.

Its subcellular location is the nucleus. In terms of biological role, as part of the heterotrimeric replication protein A complex (RPA/RP-A), binds and stabilizes single-stranded DNA intermediates, that form during DNA replication or upon DNA stress. It prevents their reannealing and in parallel, recruits and activates different proteins and complexes involved in DNA metabolism. Thereby, it plays an essential role both in DNA replication and the cellular response to DNA damage. In the cellular response to DNA damage, the RPA complex controls DNA repair and DNA damage checkpoint activation. Through recruitment of ATRIP activates the ATR kinase a master regulator of the DNA damage response. It is required for the recruitment of the DNA double-strand break repair factors RAD51 and RAD52 to chromatin, in response to DNA damage. Also recruits to sites of DNA damage proteins like XPA and XPG that are involved in nucleotide excision repair and is required for this mechanism of DNA repair. Also plays a role in base excision repair (BER), probably through interaction with UNG. Also recruits SMARCAL1/HARP, which is involved in replication fork restart, to sites of DNA damage. May also play a role in telomere maintenance. RPA3 has its own single-stranded DNA-binding activity and may be responsible for polarity of the binding of the complex to DNA. In Mus musculus (Mouse), this protein is Replication protein A 14 kDa subunit (Rpa3).